The sequence spans 418 residues: Putative ion-transport protein YfeO (418 aa).

12 consecutive transmembrane segments (helical) span residues 10-30 (LLLS…LIVV), 54-74 (DSPL…GLVI), 99-119 (ALPG…SLGP), 120-140 (EHPI…RLLP), 149-169 (ILAS…AALI), 186-206 (LFAP…FFHP), 223-243 (ILSG…AVWC), 258-278 (VLVL…GGPV), 300-320 (DYFL…ASGF), 322-342 (GGRI…LHEH), 343-363 (VPAV…VLVV), and 371-391 (LFMA…CIVM).

Belongs to the chloride channel (TC 2.A.49) family.

The protein localises to the cell membrane. The polypeptide is Putative ion-transport protein YfeO (Escherichia coli O139:H28 (strain E24377A / ETEC)).